A 187-amino-acid polypeptide reads, in one-letter code: Peptidyl-tRNA hydrolase (187 aa).

Y14 serves as a coordination point for tRNA. Catalysis depends on H19, which acts as the Proton acceptor. TRNA is bound by residues F60 and N62.

Belongs to the PTH family. In terms of assembly, monomer.

The protein localises to the cytoplasm. The enzyme catalyses an N-acyl-L-alpha-aminoacyl-tRNA + H2O = an N-acyl-L-amino acid + a tRNA + H(+). In terms of biological role, hydrolyzes ribosome-free peptidyl-tRNAs (with 1 or more amino acids incorporated), which drop off the ribosome during protein synthesis, or as a result of ribosome stalling. Functionally, catalyzes the release of premature peptidyl moieties from peptidyl-tRNA molecules trapped in stalled 50S ribosomal subunits, and thus maintains levels of free tRNAs and 50S ribosomes. The protein is Peptidyl-tRNA hydrolase of Pseudothermotoga lettingae (strain ATCC BAA-301 / DSM 14385 / NBRC 107922 / TMO) (Thermotoga lettingae).